Consider the following 213-residue polypeptide: ATP phosphoribosyltransferase (213 aa).

The protein belongs to the ATP phosphoribosyltransferase family. Short subfamily. As to quaternary structure, heteromultimer composed of HisG and HisZ subunits.

Its subcellular location is the cytoplasm. It catalyses the reaction 1-(5-phospho-beta-D-ribosyl)-ATP + diphosphate = 5-phospho-alpha-D-ribose 1-diphosphate + ATP. It functions in the pathway amino-acid biosynthesis; L-histidine biosynthesis; L-histidine from 5-phospho-alpha-D-ribose 1-diphosphate: step 1/9. In terms of biological role, catalyzes the condensation of ATP and 5-phosphoribose 1-diphosphate to form N'-(5'-phosphoribosyl)-ATP (PR-ATP). Has a crucial role in the pathway because the rate of histidine biosynthesis seems to be controlled primarily by regulation of HisG enzymatic activity. This is ATP phosphoribosyltransferase from Bacillus licheniformis (strain ATCC 14580 / DSM 13 / JCM 2505 / CCUG 7422 / NBRC 12200 / NCIMB 9375 / NCTC 10341 / NRRL NRS-1264 / Gibson 46).